Reading from the N-terminus, the 248-residue chain is Adenosylcobinamide-GDP ribazoletransferase (248 aa).

Helical transmembrane passes span 24–44 (EINLKKGSALLPFVGVIIGAW), 70–90 (IIITGGFHVDALADTADGLFS), 106–126 (VGANGVIAICFYFLFYGSLFL), 134–154 (IGWLFFVLPIVAKGVTMLLFA), 157–177 (TYAGSKAGLGSIFLGVPWWPV), 188–210 (LGLFFSYIGVIAYAGVILFTIIY), and 228–248 (AGGQMGQLICLFCLVLLWGLI).

This sequence belongs to the CobS family. It depends on Mg(2+) as a cofactor.

The protein resides in the cell membrane. The enzyme catalyses alpha-ribazole + adenosylcob(III)inamide-GDP = adenosylcob(III)alamin + GMP + H(+). The catalysed reaction is alpha-ribazole 5'-phosphate + adenosylcob(III)inamide-GDP = adenosylcob(III)alamin 5'-phosphate + GMP + H(+). It functions in the pathway cofactor biosynthesis; adenosylcobalamin biosynthesis; adenosylcobalamin from cob(II)yrinate a,c-diamide: step 7/7. In terms of biological role, joins adenosylcobinamide-GDP and alpha-ribazole to generate adenosylcobalamin (Ado-cobalamin). Also synthesizes adenosylcobalamin 5'-phosphate from adenosylcobinamide-GDP and alpha-ribazole 5'-phosphate. In Listeria monocytogenes serotype 4b (strain CLIP80459), this protein is Adenosylcobinamide-GDP ribazoletransferase.